The chain runs to 152 residues: Chemokine-like factor (152 aa).

The MARVEL domain occupies 13 to 133 (FCCTLKCFVK…DCALMCQKLR (121 aa)). 4 consecutive transmembrane segments (helical) span residues 19-39 (CFVK…FIVG), 46-66 (IVIT…YTCG), 81-101 (VINS…ALIP), and 108-128 (ILGG…CALM).

This sequence belongs to the chemokine-like factor family. In terms of tissue distribution, ubiquitous.

It is found in the membrane. Functionally, may play an important role in inflammation and regeneration of skeletal muscle. Essential for embryonic development. This chain is Chemokine-like factor (Cklf), found in Mus musculus (Mouse).